Reading from the N-terminus, the 86-residue chain is Muscarinic toxin MTX6 (86 aa).

The N-terminal stretch at 1-21 (MKTLLLTLVVVTILCLDLGYT) is a signal peptide. 4 cysteine pairs are disulfide-bonded: Cys24–Cys45, Cys38–Cys63, Cys67–Cys78, and Cys79–Cys84.

Belongs to the three-finger toxin family. Short-chain subfamily. Aminergic toxin sub-subfamily. Monomer. Expressed by the venom gland.

The protein resides in the secreted. Binds to the muscarinic acetylcholine receptor (CHRM). The polypeptide is Muscarinic toxin MTX6 (Ophiophagus hannah (King cobra)).